The following is a 234-amino-acid chain: Ribonuclease Trv (234 aa).

5 cysteine pairs are disulfide-bonded: Cys5–Cys24, Cys13–Cys59, Cys23–Cys125, Cys67–Cys117, and Cys189–Cys224. N-linked (GlcNAc...) asparagine glycosylation is present at Asn15. The active site involves His52. An N-linked (GlcNAc...) asparagine glycan is attached at Asn75. Residues Glu110 and His114 contribute to the active site.

It belongs to the RNase T2 family.

It catalyses the reaction a ribonucleotidyl-ribonucleotide-RNA + H2O = a 3'-end 3'-phospho-ribonucleotide-RNA + a 5'-end dephospho-ribonucleoside-RNA + H(+). Functionally, this is a base non-specific and adenylic acid preferential ribonuclease. The protein is Ribonuclease Trv of Hypocrea rufa (Trichoderma viride).